Here is a 227-residue protein sequence, read N- to C-terminus: Octanoyltransferase (227 aa).

One can recognise a BPL/LPL catalytic domain in the interval 43-218; that stretch reads ADSQDELWIV…TFTKTLGYQE (176 aa). Substrate is bound by residues 82–89, 149–151, and 162–164; these read RGGQVTYH, SLG, and GLA. Residue cysteine 180 is the Acyl-thioester intermediate of the active site.

This sequence belongs to the LipB family.

The protein localises to the cytoplasm. It carries out the reaction octanoyl-[ACP] + L-lysyl-[protein] = N(6)-octanoyl-L-lysyl-[protein] + holo-[ACP] + H(+). It participates in protein modification; protein lipoylation via endogenous pathway; protein N(6)-(lipoyl)lysine from octanoyl-[acyl-carrier-protein]: step 1/2. In terms of biological role, catalyzes the transfer of endogenously produced octanoic acid from octanoyl-acyl-carrier-protein onto the lipoyl domains of lipoate-dependent enzymes. Lipoyl-ACP can also act as a substrate although octanoyl-ACP is likely to be the physiological substrate. The polypeptide is Octanoyltransferase (Shewanella denitrificans (strain OS217 / ATCC BAA-1090 / DSM 15013)).